Consider the following 125-residue polypeptide: MAGLSKDQLIESISSMSVIELSELVKALEEKFGVSAAAPAPAVVAGTSPAVATEEKTEFNVILGSVGTSKINVIKVVREVTGLGLKEAKDLVDGAPKTVKENVAKAEAEEIKKKFTEVGATVELK.

It belongs to the bacterial ribosomal protein bL12 family. In terms of assembly, homodimer. Part of the ribosomal stalk of the 50S ribosomal subunit. Forms a multimeric L10(L12)X complex, where L10 forms an elongated spine to which 2 to 4 L12 dimers bind in a sequential fashion. Binds GTP-bound translation factors.

Its function is as follows. Forms part of the ribosomal stalk which helps the ribosome interact with GTP-bound translation factors. Is thus essential for accurate translation. The sequence is that of Large ribosomal subunit protein bL12 from Endomicrobium trichonymphae.